A 375-amino-acid polypeptide reads, in one-letter code: tRNA-specific 2-thiouridylase MnmA (375 aa).

ATP is bound by residues 18-25 and M44; that span reads GMSGGVDS. The segment at 104 to 106 is interaction with target base in tRNA; that stretch reads NPD. The Nucleophile role is filled by C109. Residues C109 and C206 are joined by a disulfide bond. G134 provides a ligand contact to ATP. The interaction with tRNA stretch occupies residues 156 to 158; sequence KDQ. C206 (cysteine persulfide intermediate) is an active-site residue. Positions 318-319 are interaction with tRNA; sequence RY.

It belongs to the MnmA/TRMU family.

It localises to the cytoplasm. It catalyses the reaction S-sulfanyl-L-cysteinyl-[protein] + uridine(34) in tRNA + AH2 + ATP = 2-thiouridine(34) in tRNA + L-cysteinyl-[protein] + A + AMP + diphosphate + H(+). In terms of biological role, catalyzes the 2-thiolation of uridine at the wobble position (U34) of tRNA, leading to the formation of s(2)U34. In Colwellia psychrerythraea (strain 34H / ATCC BAA-681) (Vibrio psychroerythus), this protein is tRNA-specific 2-thiouridylase MnmA.